The sequence spans 1887 residues: ATP-dependent DNA helicase tlh1 (1887 aa).

Residues 329-347 are compositionally biased toward basic and acidic residues; it reads NQQRREQQDKGENKKRQDD. Disordered stretches follow at residues 329 to 372, 504 to 552, and 1110 to 1135; these read NQQR…EEEE, ERKE…NTDD, and MVEG…EMTQ. Composition is skewed to acidic residues over residues 360–372 and 524–533; these read LEDD…EEEE and SAEDDNDNDN. The segment covering 540-549 has biased composition (low complexity); the sequence is NNNNNNNNTN. The segment covering 1112–1131 has biased composition (basic and acidic residues); that stretch reads EGDKEKDKTNEEKNKDEVKA. Residues 1200–1375 form the Helicase ATP-binding domain; sequence YFSLLNRMNL…RQTFCTNFYV (176 aa). ATP is bound by residues 1213–1220 and 1240–1247; these read LPTGGGKS and MNMVTLVL. A DEAH box motif is present at residues 1322-1325; the sequence is DEAH. The region spanning 1401-1559 is the Helicase C-terminal domain; it reads DLRTLMKRTK…CVRSFLASEM (159 aa). A disordered region spans residues 1613-1643; sequence YNASFSSSPPPQPGNSSGMSAMNTNTTSTTP. Residues 1626–1642 show a composition bias toward low complexity; it reads GNSSGMSAMNTNTTSTT. The CCHC-type zinc-finger motif lies at 1804 to 1821; sequence STCYKCGKADHNLRECKL.

Belongs to the helicase family. RecQ subfamily.

It catalyses the reaction Couples ATP hydrolysis with the unwinding of duplex DNA by translocating in the 3'-5' direction.. The enzyme catalyses ATP + H2O = ADP + phosphate + H(+). Functionally, a probable ATP-dependent 3'-5' DNA helicase. Has a role in telomerase-independent telomere maintenance. This is ATP-dependent DNA helicase tlh1 from Schizosaccharomyces pombe (strain 972 / ATCC 24843) (Fission yeast).